A 201-amino-acid polypeptide reads, in one-letter code: 3-isopropylmalate dehydratase small subunit (201 aa).

Belongs to the LeuD family. LeuD type 1 subfamily. As to quaternary structure, heterodimer of LeuC and LeuD.

It carries out the reaction (2R,3S)-3-isopropylmalate = (2S)-2-isopropylmalate. It participates in amino-acid biosynthesis; L-leucine biosynthesis; L-leucine from 3-methyl-2-oxobutanoate: step 2/4. Functionally, catalyzes the isomerization between 2-isopropylmalate and 3-isopropylmalate, via the formation of 2-isopropylmaleate. The sequence is that of 3-isopropylmalate dehydratase small subunit from Shewanella oneidensis (strain ATCC 700550 / JCM 31522 / CIP 106686 / LMG 19005 / NCIMB 14063 / MR-1).